A 369-amino-acid polypeptide reads, in one-letter code: Probable serine/threonine-protein kinase DDB_G0291350 (369 aa).

Residues 22–367 (YTVNRILGEG…QVIERINQII (346 aa)) enclose the Protein kinase domain. ATP is bound by residues 28–36 (LGEGGFSFV) and Lys51. Residue Asp159 is the Proton acceptor of the active site. Positions 169-225 (NLRRPSNNNNNNNNNNNNNNNNNNNNNNNNNNNNNNNNNNNNNNNNNNNNNNNSEDS) are disordered. The segment covering 175 to 221 (NNNNNNNNNNNNNNNNNNNNNNNNNNNNNNNNNNNNNNNNNNNNNNN) has biased composition (low complexity).

Belongs to the protein kinase superfamily. Ser/Thr protein kinase family.

The enzyme catalyses L-seryl-[protein] + ATP = O-phospho-L-seryl-[protein] + ADP + H(+). The catalysed reaction is L-threonyl-[protein] + ATP = O-phospho-L-threonyl-[protein] + ADP + H(+). The polypeptide is Probable serine/threonine-protein kinase DDB_G0291350 (Dictyostelium discoideum (Social amoeba)).